The sequence spans 101 residues: Small ubiquitin-related modifier 1 (101 aa).

Position 2 is an N-acetylserine (S2). S2 carries the phosphoserine modification. Residue K7 forms a Glycyl lysine isopeptide (Lys-Gly) (interchain with G-Cter in SUMO1); alternate linkage. K7 is covalently cross-linked (Glycyl lysine isopeptide (Lys-Gly) (interchain with G-Cter in SUMO2); alternate). A Phosphoserine modification is found at S9. Glycyl lysine isopeptide (Lys-Gly) (interchain with G-Cter in SUMO2) cross-links involve residues K16, K17, and K23. Positions 16-25 (KKEGEYIKLK) are (Microbial infection) Interaction with Tula hantavirus. The region spanning 20–97 (EYIKLKVIGQ…IEVYQEQTGG (78 aa)) is the Ubiquitin-like domain. K25 participates in a covalent cross-link: Glycyl lysine isopeptide (Lys-Gly) (interchain with G-Cter in SUMO1). S32 carries the post-translational modification Phosphoserine. Residues K37, K39, K45, and K46 each participate in a glycyl lysine isopeptide (Lys-Gly) (interchain with G-Cter in SUMO2) cross-link. The (Microbial infection) Interaction with Tula hantavirus stretch occupies residues 37 to 40 (KVKM). G97 participates in a covalent cross-link: Glycyl lysine isopeptide (Gly-Lys) (interchain with K-? in acceptor proteins). Positions 98–101 (HSTV) are excised as a propeptide.

It belongs to the ubiquitin family. SUMO subfamily. As to quaternary structure, covalently attached to KCNB1; UBE2I increases cross-linking with KCNB1 and PIAS1 decreases cross-links with KCNB1. Interacts with SAE2, RANBP2, PIAS1 and PIAS2. Interacts with PRKN. Covalently attached to a number of proteins such as IKFZ1, PML, RANGAP1, HIPK2, SP100, p53, p73-alpha, MDM2, JUN, DNMT3B and TDG. Also interacts with HIF1A, HIPK2, HIPK3, CHD3, EXOSC9, RAD51 and RAD52. Interacts with USP25 (via ts SIM domain); the interaction weakly sumoylates USP25. Interacts with SIMC1, CASP8AP2, RNF111 and SOBP (via SIM domains). Interacts with BHLHE40/DEC1. Interacts with RWDD3. Interacts with UBE2I/UBC9 and this interaction is enhanced in the presence of RWDD3. Interacts with MTA1. Interacts with SENP2. Interacts with HINT1. (Microbial infection) Interacts with Epstein-barr virus BGLF4. In terms of assembly, (Microbial infection) Interacts (via N-terminus) with Tula hantavirus nucleoprotein. As to quaternary structure, (Microbial infection) Interacts (via N-terminus) with Hantaan hantavirus nucleoprotein. Post-translationally, cleavage of precursor form by SENP1 or SENP2 is necessary for function. Polymeric SUMO1 chains undergo polyubiquitination by RNF4.

The protein localises to the nucleus membrane. It localises to the nucleus speckle. It is found in the cytoplasm. The protein resides in the nucleus. Its subcellular location is the PML body. The protein localises to the cell membrane. Functionally, ubiquitin-like protein that can be covalently attached to proteins as a monomer or a lysine-linked polymer. Covalent attachment via an isopeptide bond to its substrates requires prior activation by the E1 complex SAE1-SAE2 and linkage to the E2 enzyme UBE2I, and can be promoted by E3 ligases such as PIAS1-4, RANBP2 or CBX4. This post-translational modification on lysine residues of proteins plays a crucial role in a number of cellular processes such as nuclear transport, DNA replication and repair, mitosis and signal transduction. Involved for instance in targeting RANGAP1 to the nuclear pore complex protein RANBP2. Covalently attached to the voltage-gated potassium channel KCNB1; this modulates the gating characteristics of KCNB1. Polymeric SUMO1 chains are also susceptible to polyubiquitination which functions as a signal for proteasomal degradation of modified proteins. May also regulate a network of genes involved in palate development. Covalently attached to ZFHX3. The chain is Small ubiquitin-related modifier 1 (SUMO1) from Homo sapiens (Human).